Consider the following 533-residue polypeptide: Retinoid isomerohydrolase (533 aa).

Residue serine 2 is modified to N-acetylserine. A phosphothreonine mark is found at threonine 101 and threonine 105. Cysteine 112 carries S-palmitoyl cysteine; in membrane form lipidation. An N6-acetyllysine modification is found at lysine 113. Serine 117 is subject to Phosphoserine. Histidine 180 is a Fe cation binding site. Cysteine 231 carries the S-palmitoyl cysteine; in membrane form lipid modification. Fe cation-binding residues include histidine 241 and histidine 313. Residues cysteine 329 and cysteine 330 are each lipidated (S-palmitoyl cysteine; in membrane form). Histidine 527 serves as a coordination point for Fe cation.

The protein belongs to the carotenoid oxygenase family. In terms of assembly, interacts with MYO7A; this mediates light-dependent intracellular transport of RPE65. Requires Fe(2+) as cofactor. Post-translationally, palmitoylation by LRAT regulates ligand binding specificity; the palmitoylated form (membrane form) specifically binds all-trans-retinyl-palmitate, while the soluble unpalmitoylated form binds all-trans-retinol (vitamin A). As to expression, retinal pigment epithelium specific.

The protein resides in the cytoplasm. It localises to the cell membrane. The protein localises to the microsome membrane. The catalysed reaction is an all-trans-retinyl ester + H2O = 11-cis-retinol + a fatty acid + H(+). It carries out the reaction lutein = (3R,3'S)-zeaxanthin. The enzyme catalyses all-trans-retinyl hexadecanoate + H2O = 11-cis-retinol + hexadecanoate + H(+). Its function is as follows. Critical isomerohydrolase in the retinoid cycle involved in regeneration of 11-cis-retinal, the chromophore of rod and cone opsins. Catalyzes the cleavage and isomerization of all-trans-retinyl fatty acid esters to 11-cis-retinol which is further oxidized by 11-cis retinol dehydrogenase to 11-cis-retinal for use as visual chromophore. Essential for the production of 11-cis retinal for both rod and cone photoreceptors. Also capable of catalyzing the isomerization of lutein to meso-zeaxanthin an eye-specific carotenoid. The soluble form binds vitamin A (all-trans-retinol), making it available for LRAT processing to all-trans-retinyl ester. The membrane form, palmitoylated by LRAT, binds all-trans-retinyl esters, making them available for IMH (isomerohydrolase) processing to all-cis-retinol. The soluble form is regenerated by transferring its palmitoyl groups onto 11-cis-retinol, a reaction catalyzed by LRAT. This Canis lupus familiaris (Dog) protein is Retinoid isomerohydrolase (RPE65).